The following is a 385-amino-acid chain: Putative nickel insertion protein (385 aa).

This sequence belongs to the LarC family.

This is Putative nickel insertion protein from Geobacter sp. (strain M21).